Consider the following 121-residue polypeptide: Large ribosomal subunit protein bL19 (121 aa).

It belongs to the bacterial ribosomal protein bL19 family.

Its function is as follows. This protein is located at the 30S-50S ribosomal subunit interface and may play a role in the structure and function of the aminoacyl-tRNA binding site. The chain is Large ribosomal subunit protein bL19 from Chlamydia trachomatis serovar L2 (strain ATCC VR-902B / DSM 19102 / 434/Bu).